Reading from the N-terminus, the 678-residue chain is Protein CASP (678 aa).

Topologically, residues 1–619 are cytoplasmic; sequence MAANVGSMFQ…LVLSNKMART (619 aa). Coiled coils occupy residues 67–450 and 502–556; these read LLKS…QDLS and LSII…FLQS. Ser586 carries the post-translational modification Phosphoserine. A helical; Anchor for type IV membrane protein transmembrane segment spans residues 620–640; sequence IGFFYTLFLHCLVFLVLYKLA. The Lumenal segment spans residues 641–678; the sequence is WSESMERDCATFCAKKFADHLHKFHENDNGAAAGDLWQ.

It belongs to the CASP family. As to quaternary structure, homodimer; disulfide-linked. Interacts with GOLGA5.

It localises to the golgi apparatus membrane. Functionally, may be involved in intra-Golgi retrograde transport. In Pongo abelii (Sumatran orangutan), this protein is Protein CASP (CUTL1).